The following is a 595-amino-acid chain: UvrABC system protein C (595 aa).

The GIY-YIG domain maps to 14–91 (SNPGCYLHKD…IQENMPKFNI (78 aa)). Residues 196–231 (DKIVNQLKAKMKDMSDQMEFERAAEYRDLIEAVSTL) form the UVR domain.

This sequence belongs to the UvrC family. In terms of assembly, interacts with UvrB in an incision complex.

The protein resides in the cytoplasm. Functionally, the UvrABC repair system catalyzes the recognition and processing of DNA lesions. UvrC both incises the 5' and 3' sides of the lesion. The N-terminal half is responsible for the 3' incision and the C-terminal half is responsible for the 5' incision. The sequence is that of UvrABC system protein C from Streptococcus thermophilus (strain CNRZ 1066).